The chain runs to 188 residues: PRA1 family protein 3 (188 aa).

Met-1 is subject to N-acetylmethionine. At 1–35 (MDVNIAPLRAWDDFFPGSDRFAQPDFRDISKWNNR) the chain is on the cytoplasmic side. A run of 2 helical transmembrane segments spans residues 36–56 (VVSN…MMIS) and 57–77 (VVGF…VLVF). At 78–93 (TGFVWAAHNKDALRRL) the chain is on the cytoplasmic side. Transmembrane regions (helical) follow at residues 94–114 (KKRY…FLIS) and 115–135 (MFGG…LMFI). The required for homodimer formation and heterodimer formation with ARL6IP1 stretch occupies residues 103–117 (MVVMLASYFLISMFG). The Cytoplasmic segment spans residues 136–188 (HASLRLRNLKNKLENKMEGIGLKRTPMGIVLDALEQQEEGINRLTDYISKVKE). The segment at 136–188 (HASLRLRNLKNKLENKMEGIGLKRTPMGIVLDALEQQEEGINRLTDYISKVKE) is targeting to endoplasmic reticulum membrane.

The protein belongs to the PRA1 family. As to quaternary structure, homodimer. Heterodimer with ARL6IP1. Forms multimers. Interacts with ARL6. Interacts with prenylated RAB1A and RAB3A. Interacts with SLC1A1/EAAC1. Interacts with RTN2 (via first transmembrane domain). Does not interact with VAMP1, VAMP2 or VAMP3.

The protein resides in the endoplasmic reticulum membrane. It localises to the cell membrane. It is found in the cytoplasm. Its subcellular location is the cytoskeleton. Its function is as follows. Regulates intracellular concentrations of taurine and glutamate. Negatively modulates SLC1A1/EAAC1 glutamate transport activity by decreasing its affinity for glutamate in a PKC activity-dependent manner. Plays a role in the retention of SLC1A1/EAAC1 in the endoplasmic reticulum. This Macaca fascicularis (Crab-eating macaque) protein is PRA1 family protein 3 (ARL6IP5).